A 77-amino-acid chain; its full sequence is U14-theraphotoxin-Cg1c (77 aa).

The N-terminal stretch at 1-21 is a signal peptide; that stretch reads MNTSDPPAVLRIAAITLLCTA. Positions 22–49 are excised as a propeptide; it reads SESVEQNPLIPFENAVLGSYAKMASEKR. Intrachain disulfides connect Cys-50/Cys-64 and Cys-57/Cys-69.

This sequence belongs to the neurotoxin 10 (Hwtx-1) family. 65 (Jztx-21) subfamily. In terms of tissue distribution, expressed by the venom gland.

The protein resides in the secreted. Functionally, probable ion channel inhibitor. This is U14-theraphotoxin-Cg1c from Chilobrachys guangxiensis (Chinese earth tiger tarantula).